Here is a 145-residue protein sequence, read N- to C-terminus: Protein SprT-like (145 aa).

A SprT-like domain is found at 5–140; sequence DYVREVSLAD…ACGRCHGRLI (136 aa). Residue histidine 64 coordinates Zn(2+). Residue glutamate 65 is part of the active site. Residue histidine 68 participates in Zn(2+) binding.

This sequence belongs to the SprT family. Zn(2+) is required as a cofactor.

The protein resides in the cytoplasm. In Streptococcus equi subsp. zooepidemicus (strain MGCS10565), this protein is Protein SprT-like.